The primary structure comprises 180 residues: ATP-dependent protease subunit HslV (180 aa).

T5 is an active-site residue. Na(+) contacts are provided by G165, C168, and T171.

Belongs to the peptidase T1B family. HslV subfamily. In terms of assembly, a double ring-shaped homohexamer of HslV is capped on each side by a ring-shaped HslU homohexamer. The assembly of the HslU/HslV complex is dependent on binding of ATP.

It localises to the cytoplasm. The enzyme catalyses ATP-dependent cleavage of peptide bonds with broad specificity.. Its activity is regulated as follows. Allosterically activated by HslU binding. In terms of biological role, protease subunit of a proteasome-like degradation complex believed to be a general protein degrading machinery. In Helicobacter pylori (strain HPAG1), this protein is ATP-dependent protease subunit HslV.